The primary structure comprises 255 residues: MYIEVTGYGPALVLIHGWAMHSGVFAPLVEQLRPHHTLYLVDLPGHGYNHTTPTPLALPQVVHAIAAATPPAVWLGWSLGGLFALHAAATLPQVRGLIMLAATPCFVRREDWPHAVEVSIFTQFAQDLKQNYTETINRFLALDTLGSTHAQSELRQLRKILNARHTPNTATLQAGLELLAHTDLRRAVIDLTPPSLWIAGQRDRLVPAASIQAATALAPSGQTELLTITGGGHAPFLSHANQMTAALQHFIATLP.

Residues W18, 78–79 (SL), and 139–143 (FLALD) each bind substrate. Residue S78 is the Nucleophile of the active site. Catalysis depends on residues D203 and H233. H233 contacts substrate.

It belongs to the AB hydrolase superfamily. Carboxylesterase BioH family. In terms of assembly, monomer.

It is found in the cytoplasm. The enzyme catalyses 6-carboxyhexanoyl-[ACP] methyl ester + H2O = 6-carboxyhexanoyl-[ACP] + methanol + H(+). The protein operates within cofactor biosynthesis; biotin biosynthesis. Its function is as follows. The physiological role of BioH is to remove the methyl group introduced by BioC when the pimeloyl moiety is complete. It allows to synthesize pimeloyl-ACP via the fatty acid synthetic pathway through the hydrolysis of the ester bonds of pimeloyl-ACP esters. This Xylella fastidiosa (strain M12) protein is Pimeloyl-[acyl-carrier protein] methyl ester esterase.